The primary structure comprises 356 residues: Tyrosine recombinase XerS (356 aa).

Residues 16–121 (IMPWYVLDYY…ALSSLYKYLT (106 aa)) enclose the Core-binding (CB) domain. Residues 169 to 354 (AFLDYVDKEY…VNDEQKNALD (186 aa)) enclose the Tyr recombinase domain. Catalysis depends on residues Arg-210, Lys-234, His-306, Arg-309, and His-332. Residue Tyr-341 is the O-(3'-phospho-DNA)-tyrosine intermediate of the active site.

Belongs to the 'phage' integrase family. XerS subfamily.

It is found in the cytoplasm. With respect to regulation, ftsK is required for recombination. Functionally, site-specific tyrosine recombinase, which acts by catalyzing the cutting and rejoining of the recombining DNA molecules. Essential to convert dimers of the bacterial chromosome into monomers to permit their segregation at cell division. This chain is Tyrosine recombinase XerS, found in Streptococcus equi subsp. zooepidemicus (strain MGCS10565).